We begin with the raw amino-acid sequence, 505 residues long: uncharacterized protein (505 aa).

The tract at residues 461–480 (RTDVHPGNSDDEGAYSSADS) is disordered.

The protein to M.jannaschii MJ0787.

This is an uncharacterized protein from Methanothermobacter thermautotrophicus (strain ATCC 29096 / DSM 1053 / JCM 10044 / NBRC 100330 / Delta H) (Methanobacterium thermoautotrophicum).